Here is a 221-residue protein sequence, read N- to C-terminus: Pyridoxine/pyridoxamine 5'-phosphate oxidase (221 aa).

A disordered region spans residues 1 to 21 (MDYSDPAELRESYDGAPLDPR). Residues 10 to 13 (RESY) and K68 contribute to the substrate site. Residues 63-68 (RTVLLK), 78-79 (FT), R84, K85, and Q107 each bind FMN. Residues Y125, R129, and S133 each contribute to the substrate site. Residues 143 to 144 (QS) and W189 each bind FMN. 195 to 197 (RMH) provides a ligand contact to substrate. R199 contacts FMN.

Belongs to the pyridoxamine 5'-phosphate oxidase family. In terms of assembly, homodimer. It depends on FMN as a cofactor.

It carries out the reaction pyridoxamine 5'-phosphate + O2 + H2O = pyridoxal 5'-phosphate + H2O2 + NH4(+). The enzyme catalyses pyridoxine 5'-phosphate + O2 = pyridoxal 5'-phosphate + H2O2. Its pathway is cofactor metabolism; pyridoxal 5'-phosphate salvage; pyridoxal 5'-phosphate from pyridoxamine 5'-phosphate: step 1/1. It participates in cofactor metabolism; pyridoxal 5'-phosphate salvage; pyridoxal 5'-phosphate from pyridoxine 5'-phosphate: step 1/1. Its function is as follows. Catalyzes the oxidation of either pyridoxine 5'-phosphate (PNP) or pyridoxamine 5'-phosphate (PMP) into pyridoxal 5'-phosphate (PLP). In Thermobifida fusca (strain YX), this protein is Pyridoxine/pyridoxamine 5'-phosphate oxidase.